A 94-amino-acid polypeptide reads, in one-letter code: Large ribosomal subunit protein bL27 (94 aa).

The propeptide occupies 1-10; it reads MQFLFNIQLF.

This sequence belongs to the bacterial ribosomal protein bL27 family. Post-translationally, the N-terminus is cleaved by ribosomal processing cysteine protease Prp.

This chain is Large ribosomal subunit protein bL27, found in Fusobacterium nucleatum subsp. nucleatum (strain ATCC 25586 / DSM 15643 / BCRC 10681 / CIP 101130 / JCM 8532 / KCTC 2640 / LMG 13131 / VPI 4355).